The following is a 171-amino-acid chain: Ribosome-binding factor A (171 aa).

A compositionally biased stretch (low complexity) spans 120–132; sequence AALAAAAQPAGDP. The disordered stretch occupies residues 120-171; sequence AALAAAAQPAGDPDPYKKPVDHTDDWDEDDEDDRDGDDAVDALDAAADVPRL. Residues 133–142 show a composition bias toward basic and acidic residues; the sequence is DPYKKPVDHT. Over residues 143–160 the composition is skewed to acidic residues; the sequence is DDWDEDDEDDRDGDDAVD. A compositionally biased stretch (low complexity) spans 161 to 171; it reads ALDAAADVPRL.

This sequence belongs to the RbfA family. As to quaternary structure, monomer. Binds 30S ribosomal subunits, but not 50S ribosomal subunits or 70S ribosomes.

The protein resides in the cytoplasm. Its function is as follows. One of several proteins that assist in the late maturation steps of the functional core of the 30S ribosomal subunit. Associates with free 30S ribosomal subunits (but not with 30S subunits that are part of 70S ribosomes or polysomes). Required for efficient processing of 16S rRNA. May interact with the 5'-terminal helix region of 16S rRNA. This chain is Ribosome-binding factor A, found in Kineococcus radiotolerans (strain ATCC BAA-149 / DSM 14245 / SRS30216).